The chain runs to 191 residues: Small ribosomal subunit protein uS7 (191 aa).

Positions 56–80 (NKSGEQGDGDGEGGGKAGGIKKRSL) are disordered.

Belongs to the universal ribosomal protein uS7 family. Part of the 30S ribosomal subunit. Contacts proteins S9 and S11.

One of the primary rRNA binding proteins, it binds directly to 16S rRNA where it nucleates assembly of the head domain of the 30S subunit. Is located at the subunit interface close to the decoding center, probably blocks exit of the E-site tRNA. The protein is Small ribosomal subunit protein uS7 of Coxiella burnetii (strain CbuG_Q212) (Coxiella burnetii (strain Q212)).